The following is a 197-amino-acid chain: MQVHDVELTISAVEENQYPATALPELALVGRSNVGKSSLTNVLINRKNYAHTSGQPGKTQTLNFYEVEHKLYFVDVPGYGYAKVSKKQREKFGKMIENYLTTREQLRGVVQLVDGRHAPTEDDRMMFQWLAYYHIPTLVVATKVDKVKPNAHNRIVKVVKEGLGAAKDQDLILFSATTKKGAESVWQWIEERTGVSD.

An EngB-type G domain is found at 22 to 195; it reads ALPELALVGR…WQWIEERTGV (174 aa). Residues 30–37, 57–61, 75–78, 142–145, and 174–176 contribute to the GTP site; these read GRSNVGKS, GKTQT, DVPG, TKVD, and FSA. 2 residues coordinate Mg(2+): Ser37 and Thr59.

Belongs to the TRAFAC class TrmE-Era-EngA-EngB-Septin-like GTPase superfamily. EngB GTPase family. It depends on Mg(2+) as a cofactor.

Necessary for normal cell division and for the maintenance of normal septation. This Limosilactobacillus fermentum (strain NBRC 3956 / LMG 18251) (Lactobacillus fermentum) protein is Probable GTP-binding protein EngB.